A 330-amino-acid polypeptide reads, in one-letter code: Protein RfbI (330 aa).

Positions 3–89 (HIIKIFPSNI…ELNAHFFPEL (87 aa)) constitute a 2Fe-2S ferredoxin-type domain. Positions 37, 42, and 45 each coordinate [2Fe-2S] cluster. The 99-residue stretch at 94-192 (KKIVPCKVNS…EGPCGTFFIR (99 aa)) folds into the FAD-binding FR-type domain.

[2Fe-2S] cluster is required as a cofactor.

Its pathway is bacterial outer membrane biogenesis; LPS O-antigen biosynthesis. This is Protein RfbI (rfbI) from Salmonella typhimurium (strain LT2 / SGSC1412 / ATCC 700720).